Reading from the N-terminus, the 226-residue chain is MSESLTWHDVIGNEKQQAYFQQTLQFVESQRQAGKVIYPPAKDVFNAFRFTEFGDVKVVILGQDPYHGPNQAHGLCFSVLPGVKTPPSLVNIYKELAQDIPGFQIPPHGYLQSWAQQGVLLLNTVLTVEQGMAHSHANTGWETFTDRVIDALNQHRNGLIFLLWGSHAQKKGQMIDRQRHHVLMAPHPSPLSAHRGFLGCRHFSKTNQLLQAQGIAPINWQPELES.

Asp64 functions as the Proton acceptor in the catalytic mechanism.

This sequence belongs to the uracil-DNA glycosylase (UDG) superfamily. UNG family.

The protein localises to the cytoplasm. The enzyme catalyses Hydrolyzes single-stranded DNA or mismatched double-stranded DNA and polynucleotides, releasing free uracil.. In terms of biological role, excises uracil residues from the DNA which can arise as a result of misincorporation of dUMP residues by DNA polymerase or due to deamination of cytosine. This Vibrio cholerae serotype O1 (strain ATCC 39541 / Classical Ogawa 395 / O395) protein is Uracil-DNA glycosylase.